Reading from the N-terminus, the 126-residue chain is Protein ApaG (126 aa).

The ApaG domain occupies 2 to 126; sequence SALDTSIRVE…FRLTTPGLLH (125 aa).

The sequence is that of Protein ApaG from Shewanella baltica (strain OS195).